The sequence spans 344 residues: Heat-inducible transcription repressor HrcA (344 aa).

Belongs to the HrcA family.

Its function is as follows. Negative regulator of class I heat shock genes (grpE-dnaK-dnaJ and groELS operons). Prevents heat-shock induction of these operons. The chain is Heat-inducible transcription repressor HrcA from Corynebacterium aurimucosum (strain ATCC 700975 / DSM 44827 / CIP 107346 / CN-1) (Corynebacterium nigricans).